The primary structure comprises 402 residues: Diaminopimelate decarboxylase (402 aa).

Lys45 carries the N6-(pyridoxal phosphate)lysine modification. Pyridoxal 5'-phosphate is bound by residues Gly224 and 259 to 262 (EPGR). Substrate-binding residues include Arg262, Arg298, and Tyr302. The active-site Proton donor is Cys327. 2 residues coordinate substrate: Glu328 and Tyr356. Residue Tyr356 participates in pyridoxal 5'-phosphate binding.

It belongs to the Orn/Lys/Arg decarboxylase class-II family. LysA subfamily. As to quaternary structure, homodimer. Requires pyridoxal 5'-phosphate as cofactor.

The catalysed reaction is meso-2,6-diaminopimelate + H(+) = L-lysine + CO2. The protein operates within amino-acid biosynthesis; L-lysine biosynthesis via DAP pathway; L-lysine from DL-2,6-diaminopimelate: step 1/1. Its function is as follows. Specifically catalyzes the decarboxylation of meso-diaminopimelate (meso-DAP) to L-lysine. This Campylobacter jejuni subsp. jejuni serotype O:2 (strain ATCC 700819 / NCTC 11168) protein is Diaminopimelate decarboxylase.